The following is a 362-amino-acid chain: Homoserine O-acetyltransferase FUB5 (362 aa).

The 324-residue stretch at 12–335 folds into the AB hydrolase-1 domain; that stretch reads NVMIICHALS…VSDDGHDAFL (324 aa). S110 functions as the Nucleophile in the catalytic mechanism. The tract at residues 195-232 is disordered; that stretch reads RFGRDTGNKKKTQQQDSKTIPNNGTPIHSQGGADETPV. Polar residues predominate over residues 208–222; the sequence is QQDSKTIPNNGTPIH. Residues D302 and H331 contribute to the active site.

It belongs to the AB hydrolase superfamily. MetX family.

It carries out the reaction L-homoserine + acetyl-CoA = O-acetyl-L-homoserine + CoA. It participates in mycotoxin biosynthesis. In terms of biological role, homoserine O-acetyltransferase; part of the gene cluster that mediates the biosynthesis of fusaric acid, a mycotoxin with low to moderate toxicity to animals and humans, but with high phytotoxic properties. L-aspartate is suggested as fusaric acid amino acid precursor that is activated and further processed to O-acetyl-L-homoserine by cluster enzymes aspartate kinase FUB3 and homoserine O-acetyltransferase FUB5, as well as enzymes of the primary metabolism. The polyketide synthase (PKS) FUB1 generates the triketide trans-2-hexenal which is presumptively released by the hydrolase FUB4 and linked to the NRPS-bound amino acid precursor by NAD(P)-dependent dehydrogenase FUB6. FUB1, FUB4, and the non-canonical NRPS Fub8 may form an enzyme complex. Further processing of the NRPS-bound intermediate might be carried out by FUB6 and the O-acetylhomoserine FUB7, enabling a spontaneous electrocyclization to close the carbon backbone of fusaric acid. Dihydrofusaric acid is likely to be released via reduction by the thioester reductase (TR) domain of FUB8 whereupon the final oxidation to fusaric acid may (also) be performed by the FMN-dependent dehydrogenase FUB9. This chain is Homoserine O-acetyltransferase FUB5, found in Fusarium oxysporum f. sp. lycopersici (strain 4287 / CBS 123668 / FGSC 9935 / NRRL 34936) (Fusarium vascular wilt of tomato).